The chain runs to 742 residues: Photosystem I P700 chlorophyll a apoprotein A2 2 (742 aa).

8 helical membrane-spanning segments follow: residues 46 to 69 (IFATHFGHVAIIFLWASSLLFHVA), 135 to 158 (LYQGSVFLLLLAALFLFAGWLHLQ), 175 to 199 (LNHHLAGLFGVSSLAWAGHLIHVAI), 273 to 291 (MAHHHLAIAVIFIIAGHMY), 334 to 357 (LHFQLSIHLAALGTALSLVAQHMY), 373 to 399 (AALYTHHQYIAGFLMIGAFAHAGIFWI), 421 to 443 (AIISHLSWVSLFLGFHTLGIYVH), and 524 to 542 (FLVHHAIALGLHTTTLICV). Residues C566 and C575 each contribute to the [4Fe-4S] cluster site. A run of 2 helical transmembrane segments spans residues 583–604 (SFYLALFWMLNLLGWVTFYWHW) and 651–673 (LSVWAWMFLFGHLVWATGFMFLI). The chlorophyll a site is built by H662, M670, and Y678. W679 serves as a coordination point for phylloquinone. The chain crosses the membrane as a helical span at residues 715-735 (LVGLAHFTVGYILTYAAFLIA).

The protein belongs to the PsaA/PsaB family. In terms of assembly, the PsaA/B heterodimer binds the P700 chlorophyll special pair and subsequent electron acceptors. PSI consists of a core antenna complex that captures photons, and an electron transfer chain that converts photonic excitation into a charge separation. The cyanobacterial PSI reaction center is composed of one copy each of PsaA,B,C,D,E,F,I,J,K,L,M and X, and forms trimeric complexes. PSI electron transfer chain: 5 chlorophyll a, 1 chlorophyll a', 2 phylloquinones and 3 4Fe-4S clusters. PSI core antenna: 90 chlorophyll a, 22 carotenoids, 3 phospholipids and 1 galactolipid. P700 is a chlorophyll a/chlorophyll a' dimer, A0 is one or more chlorophyll a, A1 is one or both phylloquinones and FX is a shared 4Fe-4S iron-sulfur center. is required as a cofactor.

It localises to the cellular thylakoid membrane. It carries out the reaction reduced [plastocyanin] + hnu + oxidized [2Fe-2S]-[ferredoxin] = oxidized [plastocyanin] + reduced [2Fe-2S]-[ferredoxin]. PsaA and PsaB bind P700, the primary electron donor of photosystem I (PSI), as well as the electron acceptors A0, A1 and FX. PSI is a plastocyanin/cytochrome c6-ferredoxin oxidoreductase, converting photonic excitation into a charge separation, which transfers an electron from the donor P700 chlorophyll pair to the spectroscopically characterized acceptors A0, A1, FX, FA and FB in turn. Oxidized P700 is reduced on the lumenal side of the thylakoid membrane by plastocyanin or cytochrome c6. The polypeptide is Photosystem I P700 chlorophyll a apoprotein A2 2 (psaB2) (Nostoc sp. (strain PCC 7120 / SAG 25.82 / UTEX 2576)).